Consider the following 210-residue polypeptide: Large ribosomal subunit protein uL4 (210 aa).

This sequence belongs to the universal ribosomal protein uL4 family. In terms of assembly, part of the 50S ribosomal subunit.

Its function is as follows. One of the primary rRNA binding proteins, this protein initially binds near the 5'-end of the 23S rRNA. It is important during the early stages of 50S assembly. It makes multiple contacts with different domains of the 23S rRNA in the assembled 50S subunit and ribosome. Functionally, forms part of the polypeptide exit tunnel. The polypeptide is Large ribosomal subunit protein uL4 (Orientia tsutsugamushi (strain Boryong) (Rickettsia tsutsugamushi)).